The chain runs to 482 residues: tRNA sulfurtransferase (482 aa).

One can recognise a THUMP domain in the interval 58–160 (VEALQELSRV…GNKAYLYSNV (103 aa)). ATP-binding positions include 178–179 (LF), 203–204 (HY), R260, G282, and Q291. A disulfide bond links C341 and C444. The 83-residue stretch at 400 to 482 (IPGDSIIIDV…RYRAGLEKTR (83 aa)) folds into the Rhodanese domain. The Cysteine persulfide intermediate role is filled by C444.

It belongs to the ThiI family.

The protein localises to the cytoplasm. It carries out the reaction [ThiI sulfur-carrier protein]-S-sulfanyl-L-cysteine + a uridine in tRNA + 2 reduced [2Fe-2S]-[ferredoxin] + ATP + H(+) = [ThiI sulfur-carrier protein]-L-cysteine + a 4-thiouridine in tRNA + 2 oxidized [2Fe-2S]-[ferredoxin] + AMP + diphosphate. The catalysed reaction is [ThiS sulfur-carrier protein]-C-terminal Gly-Gly-AMP + S-sulfanyl-L-cysteinyl-[cysteine desulfurase] + AH2 = [ThiS sulfur-carrier protein]-C-terminal-Gly-aminoethanethioate + L-cysteinyl-[cysteine desulfurase] + A + AMP + 2 H(+). It functions in the pathway cofactor biosynthesis; thiamine diphosphate biosynthesis. In terms of biological role, catalyzes the ATP-dependent transfer of a sulfur to tRNA to produce 4-thiouridine in position 8 of tRNAs, which functions as a near-UV photosensor. Also catalyzes the transfer of sulfur to the sulfur carrier protein ThiS, forming ThiS-thiocarboxylate. This is a step in the synthesis of thiazole, in the thiamine biosynthesis pathway. The sulfur is donated as persulfide by IscS. The sequence is that of tRNA sulfurtransferase from Desulfurococcus amylolyticus (strain DSM 18924 / JCM 16383 / VKM B-2413 / 1221n) (Desulfurococcus kamchatkensis).